A 93-amino-acid polypeptide reads, in one-letter code: UPF0297 protein PEPE_1262 (93 aa).

This sequence belongs to the UPF0297 family.

The polypeptide is UPF0297 protein PEPE_1262 (Pediococcus pentosaceus (strain ATCC 25745 / CCUG 21536 / LMG 10740 / 183-1w)).